A 539-amino-acid chain; its full sequence is Glutamyl-tRNA(Gln) amidotransferase subunit B, mitochondrial (539 aa).

The protein belongs to the GatB/GatE family. GatB subfamily. Subunit of the heterotrimeric GatFAB amidotransferase (AdT) complex, composed of A, B and F subunits.

Its subcellular location is the mitochondrion. It carries out the reaction L-glutamyl-tRNA(Gln) + L-glutamine + ATP + H2O = L-glutaminyl-tRNA(Gln) + L-glutamate + ADP + phosphate + H(+). Allows the formation of correctly charged Gln-tRNA(Gln) through the transamidation of misacylated Glu-tRNA(Gln) in the mitochondria. The reaction takes place in the presence of glutamine and ATP through an activated gamma-phospho-Glu-tRNA(Gln). This Kluyveromyces lactis (strain ATCC 8585 / CBS 2359 / DSM 70799 / NBRC 1267 / NRRL Y-1140 / WM37) (Yeast) protein is Glutamyl-tRNA(Gln) amidotransferase subunit B, mitochondrial.